A 230-amino-acid chain; its full sequence is Urease accessory protein UreF (230 aa).

It belongs to the UreF family. As to quaternary structure, ureD, UreF and UreG form a complex that acts as a GTP-hydrolysis-dependent molecular chaperone, activating the urease apoprotein by helping to assemble the nickel containing metallocenter of UreC. The UreE protein probably delivers the nickel.

The protein resides in the cytoplasm. Its function is as follows. Required for maturation of urease via the functional incorporation of the urease nickel metallocenter. In Cupriavidus metallidurans (strain ATCC 43123 / DSM 2839 / NBRC 102507 / CH34) (Ralstonia metallidurans), this protein is Urease accessory protein UreF.